The primary structure comprises 400 residues: MSLGRDRYSLPRTYKRVSHAKDKARPELRKFGWETLGYSESFNLPPFRDSIQRVDGNNLTVEEFRRDFERPRIPVIITGLTDNWAAKDKWTVERLSKKYRNQNFKCGEDDNGNSVRMKMKYYHDYMLNNKDDSPLYIFDSSFAERRKTKKLSEDYSVPKFFEDDLFHYADDKKRPPHRWFVMGPARSGTAIHIDPLGTSAWNSLLQGHKRWVLIPPIAPRDLVKPMAHEKGKHPDEGITWFQTVYKRVRSPSWPKEYAPIECRQGPGETMFVPSGWWHVVINEEYTIAVTHNYCSVENLHLVWPKTVKGRPKLSKHWVKRLTEQRPELLEIIKSASEIPLYDMNESSSDSSSSSSSSDDSSDESDCDDSGRCGGRKRKNDDRSNECPEKMSTTYFQNSLV.

Residues 146-310 (RKTKKLSEDY…LVWPKTVKGR (165 aa)) enclose the JmjC domain. Threonine 189 serves as a coordination point for substrate. Histidine 192 and aspartate 194 together coordinate Fe cation. Asparagine 202 provides a ligand contact to 2-oxoglutarate. Lysine 209 lines the substrate pocket. Histidine 278 provides a ligand contact to Fe cation. Threonine 290 is a binding site for 2-oxoglutarate. A disordered region spans residues 342–400 (DMNESSSDSSSSSSSSDDSSDESDCDDSGRCGGRKRKNDDRSNECPEKMSTTYFQNSLV). The span at 346-358 (SSSDSSSSSSSSD) shows a compositional bias: low complexity. Over residues 378-388 (KNDDRSNECPE) the composition is skewed to basic and acidic residues. A compositionally biased stretch (polar residues) spans 390–400 (MSTTYFQNSLV).

Belongs to the JMJD6 family. Interacts with ced-5 and ced-12. The cofactor is Fe(2+).

It is found in the nucleus. In terms of biological role, dioxygenase that can both act as a histone arginine demethylase and a lysyl-hydroxylase. The polypeptide is Bifunctional arginine demethylase and lysyl-hydroxylase psr-1 (psr-1) (Caenorhabditis elegans).